The following is a 374-amino-acid chain: Double homeobox protein 4C (374 aa).

Over residues 1–10 the composition is skewed to polar residues; the sequence is MALPTPSDST. Disordered stretches follow at residues 1–24, 72–102, and 218–374; these read MALP…RRRL, SRQL…TAVT, and LQPS…YELL. 2 consecutive DNA-binding regions (homeobox) follow at residues 19–78 and 94–153; these read GRRR…LRQH and GRRK…PGQG. The span at 265–274 shows a compositional bias: basic and acidic residues; the sequence is KSREDRDPQR. Composition is skewed to low complexity over residues 278–302 and 319–329; these read PGPC…LAPP and AGAAWEPQAGA. Residues 354-374 are compositionally biased toward polar residues; sequence QPLQEPGRSSTVTSSLLYELL.

As to quaternary structure, may interact with MYF5; regulates MYF5 expression. As to expression, expressed in muscles, as well as in primary myoblasts and myotubes (at protein level).

Its subcellular location is the nucleus. The protein resides in the cytoplasm. In terms of biological role, down-regulates MYOD1 expression and may up-regulate MYF5 expression. May regulate microRNA (miRNA) transcription, up-regulating the expression of some myogenic miRNAs, including MIR1-1, MIR133A2, MIR133B and MIR206. Impairs the differentiation of myoblasts and may be involved in muscle regeneration. Reduces DUX4-induced nuclear localization of CTNNB1/beta-catenin and its subsequent activation of target genes. This is Double homeobox protein 4C (DUX4L9) from Homo sapiens (Human).